A 348-amino-acid polypeptide reads, in one-letter code: Rhodopsin (348 aa).

An N-acetylmethionine modification is found at methionine 1. The Extracellular segment spans residues 1-36 (MNGTEGPNFYVPFSNKTGVVRSPFEYPQYYLAEPWQ). N-linked (GlcNAc...) asparagine glycans are attached at residues asparagine 2 and asparagine 15. Residues 37-61 (FSMLAAYMFLLIVLGFPINFLTLYV) form a helical membrane-spanning segment. The Cytoplasmic segment spans residues 62–73 (TVQHKKLRTPLN). A helical transmembrane segment spans residues 74 to 96 (YILLNLAVADLFMVFGGFTTTLY). Residues 97–110 (TSLHGYFVFGPTGC) are Extracellular-facing. A disulfide bond links cysteine 110 and cysteine 187. A helical transmembrane segment spans residues 111–133 (NLEGFFATLGGEIALWSLVVLAI). A 'Ionic lock' involved in activated form stabilization motif is present at residues 134–136 (ERY). Residues 134–152 (ERYVVVCKPMSNFRFGENH) are Cytoplasmic-facing. The chain crosses the membrane as a helical span at residues 153 to 173 (AIMGVAFTWVMALACAAPPLV). At 174 to 202 (GWSRYIPEGMQCSCGIDYYTLKPEVNNES) the chain is on the extracellular side. Residue glutamate 201 coordinates Zn(2+). A helical membrane pass occupies residues 203–224 (FVIYMFVVHFTIPMIVIFFCYG). Topologically, residues 225 to 252 (QLVFTVKEAAAQQQESATTQKAEKEVTR) are cytoplasmic. Residues 253 to 274 (MVIIMVIAFLICWVPYASVAFY) traverse the membrane as a helical segment. Residues 275 to 286 (IFTHQGSNFGPI) lie on the Extracellular side of the membrane. Glutamine 279 lines the Zn(2+) pocket. The helical transmembrane segment at 287–308 (FMTLPAFFAKSSSIYNPVIYIM) threads the bilayer. The residue at position 296 (lysine 296) is an N6-(retinylidene)lysine. Residues 309 to 348 (MNKQFRNCMLTTLCCGKNPLGDDEASTTGSKTETSQVAPA) lie on the Cytoplasmic side of the membrane. S-palmitoyl cysteine attachment occurs at residues cysteine 322 and cysteine 323. Residues 330-348 (DDEASTTGSKTETSQVAPA) form an interaction with SAG region. Serine 334 bears the Phosphoserine mark. A phosphothreonine mark is found at threonine 335 and threonine 336. Serine 338 bears the Phosphoserine mark. Phosphothreonine occurs at positions 340 and 342. Serine 343 carries the phosphoserine modification.

This sequence belongs to the G-protein coupled receptor 1 family. Opsin subfamily. As to quaternary structure, homodimer. May form a complex composed of RHO, GRK1 and RCVRN in a Ca(2+)-dependent manner; RCVRN prevents the interaction between GRK1 and RHO. Interacts with GRK1. Interacts (phosphorylated form) with SAG. Interacts with GNAT1. Interacts with GNAT3. SAG and G-proteins compete for a common binding site. Interacts with PRCD; the interaction promotes PRCD stability. Forms a complex with ASAP1 and ARF4. Forms a complex with ASAP1, RAB11A, Rabin8/RAB3IP, ARF4 and RAB11FIP3; the complex regulates Golgi-to-cilia rhodopsin/RHO transport in photoreceptors. Post-translationally, phosphorylated on some or all of the serine and threonine residues present in the C-terminal region. Contains one covalently linked retinal chromophore. Upon light absorption, the covalently bound 11-cis-retinal is converted to all-trans-retinal. After hydrolysis of the Schiff base and release of the covalently bound all-trans-retinal, active rhodopsin is regenerated by binding of a fresh molecule of 11-cis-retinal.

It localises to the membrane. It is found in the cell projection. The protein resides in the cilium. Its subcellular location is the photoreceptor outer segment. In terms of biological role, photoreceptor required for image-forming vision at low light intensity. Required for photoreceptor cell viability after birth. Light-induced isomerization of 11-cis to all-trans retinal triggers a conformational change that activates signaling via G-proteins. Subsequent receptor phosphorylation mediates displacement of the bound G-protein alpha subunit by the arrestin SAG and terminates signaling. This is Rhodopsin (RHO) from Felis catus (Cat).